A 450-amino-acid chain; its full sequence is Tubulin alpha chain (450 aa).

8 residues coordinate GTP: Gln11, Glu71, Ser140, Gly144, Thr145, Thr179, Asn206, and Asn228. Glu71 is a Mg(2+) binding site. Residue Glu254 is part of the active site.

This sequence belongs to the tubulin family. As to quaternary structure, dimer of alpha and beta chains. A typical microtubule is a hollow water-filled tube with an outer diameter of 25 nm and an inner diameter of 15 nM. Alpha-beta heterodimers associate head-to-tail to form protofilaments running lengthwise along the microtubule wall with the beta-tubulin subunit facing the microtubule plus end conferring a structural polarity. Microtubules usually have 13 protofilaments but different protofilament numbers can be found in some organisms and specialized cells. The cofactor is Mg(2+).

The protein resides in the cytoplasm. It is found in the cytoskeleton. It carries out the reaction GTP + H2O = GDP + phosphate + H(+). Functionally, tubulin is the major constituent of microtubules, a cylinder consisting of laterally associated linear protofilaments composed of alpha- and beta-tubulin heterodimers. Microtubules grow by the addition of GTP-tubulin dimers to the microtubule end, where a stabilizing cap forms. Below the cap, tubulin dimers are in GDP-bound state, owing to GTPase activity of alpha-tubulin. The protein is Tubulin alpha chain of Zymoseptoria tritici (Speckled leaf blotch fungus).